The sequence spans 134 residues: GSH-induced LITAF domain protein (134 aa).

Residues 33–113 form the LITAF domain; it reads DPLGAPIQQT…CGNKVADFEK (81 aa). Positions 53 and 56 each coordinate Zn(2+). A membrane-binding amphipathic helix region spans residues 68–88; that stretch reads PGVAAVVACMMPFMLGFCFLC. The Zn(2+) site is built by Cys-101 and Cys-104.

The protein belongs to the CDIP1/LITAF family. In terms of assembly, interacts (via N- and C-terminal) with MIEL1 and LSD1 (via N-terminus).

It is found in the cell membrane. Acts as a membrane anchor, bringing other regulators of programmed cell death (PCD) to the plasma membrane. Negatively regulates hypersensitive cell death. The polypeptide is GSH-induced LITAF domain protein (Arabidopsis thaliana (Mouse-ear cress)).